The following is a 60-amino-acid chain: Andropin (60 aa).

An N-terminal signal peptide occupies residues 1–23 (MKYFVVLVVLALILAIAVGPSDA).

The protein belongs to the andropin family. As to expression, ejaculatory duct of adult males.

It localises to the secreted. Male-specific peptide with moderate activity against Gram-positive bacteria. This Drosophila simulans (Fruit fly) protein is Andropin (Anp).